A 344-amino-acid polypeptide reads, in one-letter code: Adenosine deaminase (344 aa).

Zn(2+) is bound by residues histidine 14 and histidine 16. Residues histidine 16, aspartate 18, and glycine 177 each coordinate substrate. Histidine 204 provides a ligand contact to Zn(2+). Glutamate 207 serves as the catalytic Proton donor. Aspartate 284 provides a ligand contact to Zn(2+).

It belongs to the metallo-dependent hydrolases superfamily. Adenosine and AMP deaminases family. Adenosine deaminase subfamily. Requires Zn(2+) as cofactor.

It carries out the reaction adenosine + H2O + H(+) = inosine + NH4(+). The catalysed reaction is 2'-deoxyadenosine + H2O + H(+) = 2'-deoxyinosine + NH4(+). Catalyzes the hydrolytic deamination of adenosine and 2-deoxyadenosine. In Haemophilus ducreyi (strain 35000HP / ATCC 700724), this protein is Adenosine deaminase.